A 493-amino-acid polypeptide reads, in one-letter code: Neuronal pentraxin receptor (493 aa).

At 1–2 (MK) the chain is on the cytoplasmic side. A helical; Signal-anchor for type II membrane protein transmembrane segment spans residues 3 to 23 (FLAVLLAAGMLAFLGAVICII). At 24–493 (ASVPLAASPA…FDVCKGRAKA (470 aa)) the chain is on the extracellular side. Residues 37-72 (PGGTDNASAASAAGGSGPQRSLSALHSAGGSAGPSV) form a disordered region. A glycan (N-linked (GlcNAc...) asparagine) is linked at N42. The span at 57-72 (SLSALHSAGGSAGPSV) shows a compositional bias: low complexity. Residue N211 is glycosylated (N-linked (GlcNAc...) asparagine). One can recognise a Pentraxin (PTX) domain in the interval 285-487 (DAFKVSIPIR…GAKKAAFDVC (203 aa)). Residues C315 and C376 are joined by a disulfide bond. 5 residues coordinate Ca(2+): N340, E418, Q419, D420, and Q430. Residue N456 is glycosylated (N-linked (GlcNAc...) asparagine).

As to quaternary structure, heteropentamer with NPTX1 and/or NPTX2. Also binds taipoxin-associated calcium-binding protein 49 (TCBP49/RCN2). Interacts with KLHL2. It depends on Ca(2+) as a cofactor. Ubiquitinated by a cullin-RING-based BCR (BTB-CUL3-RBX1) E3 ubiquitin-protein ligase complex containing KLHL2.

It localises to the membrane. Its function is as follows. May be involved in mediating uptake of synaptic material during synapse remodeling or in mediating the synaptic clustering of AMPA glutamate receptors at a subset of excitatory synapses. This chain is Neuronal pentraxin receptor (Nptxr), found in Mus musculus (Mouse).